The chain runs to 330 residues: Ribosomal RNA large subunit methyltransferase F (330 aa).

Belongs to the methyltransferase superfamily. METTL16/RlmF family.

It is found in the cytoplasm. The catalysed reaction is adenosine(1618) in 23S rRNA + S-adenosyl-L-methionine = N(6)-methyladenosine(1618) in 23S rRNA + S-adenosyl-L-homocysteine + H(+). Its function is as follows. Specifically methylates the adenine in position 1618 of 23S rRNA. In Pseudoalteromonas atlantica (strain T6c / ATCC BAA-1087), this protein is Ribosomal RNA large subunit methyltransferase F.